The chain runs to 79 residues: UPF0337 protein YhjA (79 aa).

Residues 1-30 (MALNDKLDATKDKVSGKVKETTGKVTGDEK) form a disordered region.

It belongs to the UPF0337 (CsbD) family.

The protein is UPF0337 protein YhjA (yhjA) of Lactococcus lactis subsp. lactis (strain IL1403) (Streptococcus lactis).